Consider the following 205-residue polypeptide: Putative 3-methyladenine DNA glycosylase (205 aa).

Belongs to the DNA glycosylase MPG family.

In Bacillus cereus (strain ATCC 14579 / DSM 31 / CCUG 7414 / JCM 2152 / NBRC 15305 / NCIMB 9373 / NCTC 2599 / NRRL B-3711), this protein is Putative 3-methyladenine DNA glycosylase.